The following is a 371-amino-acid chain: MSQLPLTSDLARIFLDDVPLIDLRAPIEFKEGAFPCSTSLPLMTDDERAQVGTCFKQRGQAAAIELGHQLVGGAVRAERLDGWLAQLRKQPDALLYCFRGGLRSQTVQLWLHEAGVTRPRVAGGYKEMRRFLIDTLDKAAAECHWTVLTGMTGSGKTHMLEHVTQAVDLEGHAHHRGSSFGQLPGGQPSNINFENKLAIELLKRRHQGEHAFVVEDESRLIGRCCLPNPLFDAMCEAPLVVVDVPQSERAEQIRQDYVHDLWLRYQAMFGAEEGWPLFAAYLTDALARLKRRLGDQAHRELDQLMQIALAEQANSGTTERHLAWITLLLTRYYDPMYLYQLGNKRERIVFRGEKQACLDFFAEQHAARQQG.

The Rhodanese domain maps to phenylalanine 14–aspartate 137. Cysteine 97 (S-selanylcysteine intermediate) is an active-site residue.

The protein belongs to the SelU family. As to quaternary structure, monomer.

It catalyses the reaction 5-methylaminomethyl-2-thiouridine(34) in tRNA + selenophosphate + (2E)-geranyl diphosphate + H2O + H(+) = 5-methylaminomethyl-2-selenouridine(34) in tRNA + (2E)-thiogeraniol + phosphate + diphosphate. The enzyme catalyses 5-methylaminomethyl-2-thiouridine(34) in tRNA + (2E)-geranyl diphosphate = 5-methylaminomethyl-S-(2E)-geranyl-thiouridine(34) in tRNA + diphosphate. It carries out the reaction 5-methylaminomethyl-S-(2E)-geranyl-thiouridine(34) in tRNA + selenophosphate + H(+) = 5-methylaminomethyl-2-(Se-phospho)selenouridine(34) in tRNA + (2E)-thiogeraniol. The catalysed reaction is 5-methylaminomethyl-2-(Se-phospho)selenouridine(34) in tRNA + H2O = 5-methylaminomethyl-2-selenouridine(34) in tRNA + phosphate. Its function is as follows. Involved in the post-transcriptional modification of the uridine at the wobble position (U34) of tRNA(Lys), tRNA(Glu) and tRNA(Gln). Catalyzes the conversion of 2-thiouridine (S2U-RNA) to 2-selenouridine (Se2U-RNA). Acts in a two-step process involving geranylation of 2-thiouridine (S2U) to S-geranyl-2-thiouridine (geS2U) and subsequent selenation of the latter derivative to 2-selenouridine (Se2U) in the tRNA chain. The protein is tRNA 2-selenouridine synthase of Aeromonas salmonicida (strain A449).